A 362-amino-acid chain; its full sequence is Solute carrier family 25 member 3 (362 aa).

Residues 1-49 (MFSSVAHLARANPFNTPHLQLVHDGLGDLRSSSPGPTGQPRRPRNLAAA) constitute a mitochondrion transit peptide. The Mitochondrial intermembrane segment spans residues 50–63 (AVEEQYSCDYGSGR). Solcar repeat units lie at residues 63 to 147 (RFFI…FKVL), 160 to 244 (WRTS…TVEA), and 261 to 339 (EQLV…VKVY). The chain crosses the membrane as a helical span at residues 64–86 (FFILCGLGGIISCGTTHTALVPL). Over 87 to 121 (DLVKCRMQVDPQKYKGIFNGFSVTLKEDGVRGLAK) the chain is Mitochondrial matrix. Lys99 is subject to N6-acetyllysine. Lys112 bears the N6-methyllysine mark. The chain crosses the membrane as a helical span at residues 122–141 (GWAPTFLGYSMQGLCKFGFY). Topologically, residues 142 to 161 (EVFKVLYSNMLGEENTYLWR) are mitochondrial intermembrane. Residues 162-183 (TSLYLAASASAEFFADIALAPM) form a helical membrane-spanning segment. Residues 184-218 (EAAKVRIQTQPGYANTLRDAAPKMYKEEGLKAFYK) lie on the Mitochondrial matrix side of the membrane. Tyr196 is modified (phosphotyrosine). Lys209 is modified (N6-acetyllysine). Residues 219–238 (GVAPLWMRQIPYTMMKFACF) traverse the membrane as a helical segment. The Mitochondrial intermembrane segment spans residues 239 to 261 (ERTVEALYKFVVPKPRSECSKPE). The helical transmembrane segment at 262–284 (QLVVTFVAGYIAGVFCAIVSHPA) threads the bilayer. The Mitochondrial matrix segment spans residues 285–314 (DSVVSVLNKEKGSSASLVLKRLGFKGVWKG). The chain crosses the membrane as a helical span at residues 315–333 (LFARIIMIGTLTALQWFIY). The Mitochondrial intermembrane segment spans residues 334–362 (DSVKVYFRLPRPPPPEMPESLKKKLGLTQ).

This sequence belongs to the mitochondrial carrier (TC 2.A.29) family. As to quaternary structure, interacts with PPIF; the interaction is impaired by CsA.

It is found in the mitochondrion inner membrane. The catalysed reaction is phosphate(in) + H(+)(in) = phosphate(out) + H(+)(out). Functionally, inorganic ion transporter that transports phosphate or copper ions across the mitochondrial inner membrane into the matrix compartment. Mediates proton-coupled symport of phosphate ions necessary for mitochondrial oxidative phosphorylation of ADP to ATP. Transports copper ions probably in the form of anionic copper(I) complexes to maintain mitochondrial matrix copper pool and to supply copper for cytochrome C oxidase complex assembly. May also play a role in regulation of the mitochondrial permeability transition pore (mPTP). This Homo sapiens (Human) protein is Solute carrier family 25 member 3.